The sequence spans 269 residues: Hydroxyethylthiazole kinase (269 aa).

Methionine 42 provides a ligand contact to substrate. Arginine 118 and serine 164 together coordinate ATP. Residue glycine 191 coordinates substrate.

Belongs to the Thz kinase family. Mg(2+) serves as cofactor.

The enzyme catalyses 5-(2-hydroxyethyl)-4-methylthiazole + ATP = 4-methyl-5-(2-phosphooxyethyl)-thiazole + ADP + H(+). The protein operates within cofactor biosynthesis; thiamine diphosphate biosynthesis; 4-methyl-5-(2-phosphoethyl)-thiazole from 5-(2-hydroxyethyl)-4-methylthiazole: step 1/1. Functionally, catalyzes the phosphorylation of the hydroxyl group of 4-methyl-5-beta-hydroxyethylthiazole (THZ). This is Hydroxyethylthiazole kinase from Listeria welshimeri serovar 6b (strain ATCC 35897 / DSM 20650 / CCUG 15529 / CIP 8149 / NCTC 11857 / SLCC 5334 / V8).